The chain runs to 432 residues: Adenylosuccinate synthetase (432 aa).

GTP is bound by residues 12 to 18 and 40 to 42; these read GDEGKGK and GHT. Aspartate 13 serves as the catalytic Proton acceptor. Residues aspartate 13 and glycine 40 each contribute to the Mg(2+) site. IMP is bound by residues 13-16, 38-41, threonine 132, arginine 146, glutamine 226, threonine 241, and arginine 305; these read DEGK and NAGH. The Proton donor role is filled by histidine 41. Residue 301–307 participates in substrate binding; that stretch reads TVTGRKR. GTP contacts are provided by residues arginine 307, 333-335, and 415-417; these read KLD and STS.

The protein belongs to the adenylosuccinate synthetase family. Homodimer. The cofactor is Mg(2+).

The protein resides in the cytoplasm. It carries out the reaction IMP + L-aspartate + GTP = N(6)-(1,2-dicarboxyethyl)-AMP + GDP + phosphate + 2 H(+). Its pathway is purine metabolism; AMP biosynthesis via de novo pathway; AMP from IMP: step 1/2. Functionally, plays an important role in the de novo pathway of purine nucleotide biosynthesis. Catalyzes the first committed step in the biosynthesis of AMP from IMP. This is Adenylosuccinate synthetase from Sinorhizobium fredii (strain NBRC 101917 / NGR234).